Here is a 590-residue protein sequence, read N- to C-terminus: Arginine--tRNA ligase (590 aa).

The 'HIGH' region signature appears at 132–142 (PNTNKPLHLGH).

This sequence belongs to the class-I aminoacyl-tRNA synthetase family. Monomer.

The protein resides in the cytoplasm. It catalyses the reaction tRNA(Arg) + L-arginine + ATP = L-arginyl-tRNA(Arg) + AMP + diphosphate. The polypeptide is Arginine--tRNA ligase (Treponema denticola (strain ATCC 35405 / DSM 14222 / CIP 103919 / JCM 8153 / KCTC 15104)).